The following is a 329-amino-acid chain: GTPase Obg (329 aa).

An Obg domain is found at 1–159 (MQFIDYAEIE…RWLRLELKLL (159 aa)). The OBG-type G domain occupies 160-328 (AEVGIIGLPN…LLQIVWQLLD (169 aa)). GTP is bound by residues 166–173 (GLPNAGKS), 191–195 (FTTLV), 213–216 (DIPG), 280–283 (NKMD), and 309–311 (SGV). Mg(2+) is bound by residues Ser-173 and Thr-193.

The protein belongs to the TRAFAC class OBG-HflX-like GTPase superfamily. OBG GTPase family. Monomer. It depends on Mg(2+) as a cofactor.

It localises to the cytoplasm. Its function is as follows. An essential GTPase which binds GTP, GDP and possibly (p)ppGpp with moderate affinity, with high nucleotide exchange rates and a fairly low GTP hydrolysis rate. Plays a role in control of the cell cycle, stress response, ribosome biogenesis and in those bacteria that undergo differentiation, in morphogenesis control. This chain is GTPase Obg, found in Rippkaea orientalis (strain PCC 8801 / RF-1) (Cyanothece sp. (strain PCC 8801)).